Reading from the N-terminus, the 430-residue chain is UDP-N-acetylglucosamine 1-carboxyvinyltransferase (430 aa).

A phosphoenolpyruvate-binding site is contributed by 22-23; the sequence is KN. Arg-102 lines the UDP-N-acetyl-alpha-D-glucosamine pocket. Residue Cys-126 is the Proton donor of the active site. 2-(S-cysteinyl)pyruvic acid O-phosphothioketal is present on Cys-126. UDP-N-acetyl-alpha-D-glucosamine is bound by residues 131–135, 172–175, Asp-317, and Ile-339; these read RPVDL and KVSV.

It belongs to the EPSP synthase family. MurA subfamily.

Its subcellular location is the cytoplasm. The catalysed reaction is phosphoenolpyruvate + UDP-N-acetyl-alpha-D-glucosamine = UDP-N-acetyl-3-O-(1-carboxyvinyl)-alpha-D-glucosamine + phosphate. The protein operates within cell wall biogenesis; peptidoglycan biosynthesis. Its function is as follows. Cell wall formation. Adds enolpyruvyl to UDP-N-acetylglucosamine. This is UDP-N-acetylglucosamine 1-carboxyvinyltransferase from Rhizobium etli (strain CIAT 652).